A 367-amino-acid polypeptide reads, in one-letter code: Histidinol-phosphate aminotransferase (367 aa).

The residue at position 225 (lysine 225) is an N6-(pyridoxal phosphate)lysine.

It belongs to the class-II pyridoxal-phosphate-dependent aminotransferase family. Histidinol-phosphate aminotransferase subfamily. Homodimer. It depends on pyridoxal 5'-phosphate as a cofactor.

The catalysed reaction is L-histidinol phosphate + 2-oxoglutarate = 3-(imidazol-4-yl)-2-oxopropyl phosphate + L-glutamate. It functions in the pathway amino-acid biosynthesis; L-histidine biosynthesis; L-histidine from 5-phospho-alpha-D-ribose 1-diphosphate: step 7/9. This is Histidinol-phosphate aminotransferase from Hyphomonas neptunium (strain ATCC 15444).